Reading from the N-terminus, the 288-residue chain is Glutamate racemase (288 aa).

The disordered stretch occupies residues 1-21; sequence MAIARQDVNISSPEATTSDAQ. Over residues 8 to 21 the composition is skewed to polar residues; sequence VNISSPEATTSDAQ. Substrate is bound by residues 32 to 33 and 64 to 65; these read DS and YG. Cys-96 serves as the catalytic Proton donor/acceptor. Residue 97–98 participates in substrate binding; sequence NT. Cys-209 acts as the Proton donor/acceptor in catalysis. Residue 210–211 coordinates substrate; it reads TH.

Belongs to the aspartate/glutamate racemases family.

The catalysed reaction is L-glutamate = D-glutamate. It participates in cell wall biogenesis; peptidoglycan biosynthesis. Its function is as follows. Provides the (R)-glutamate required for cell wall biosynthesis. This Proteus mirabilis (strain HI4320) protein is Glutamate racemase.